A 130-amino-acid polypeptide reads, in one-letter code: ATP synthase epsilon chain (130 aa).

Belongs to the ATPase epsilon chain family. In terms of assembly, F-type ATPases have 2 components, CF(1) - the catalytic core - and CF(0) - the membrane proton channel. CF(1) has five subunits: alpha(3), beta(3), gamma(1), delta(1), epsilon(1). CF(0) has three main subunits: a, b and c.

It is found in the cell inner membrane. Functionally, produces ATP from ADP in the presence of a proton gradient across the membrane. The chain is ATP synthase epsilon chain from Campylobacter lari (strain RM2100 / D67 / ATCC BAA-1060).